Consider the following 252-residue polypeptide: MNKLQNIRGVAFDLDGTLVDSAPGLAAAVDMALYALELPVAGEERVITWIGNGADVLMERALTWARQERATLRKTMGKPPVDEDIPAEEQVRILRKLFDRYYGEVAEEGTFLFPHVADTLGALHASGLSLGLVTNKPTPFVAPLLESLDIAKYFSVVIGGDDVQNKKPHPEPLLLVASRLGMTPEQMLFVGDSRNDIQAAKAAGCPSVGLTYGYNYGEAIALSEPDVIYDSFNDLLPALGLPHSDNQEIKND.

Asp-13 acts as the Nucleophile in catalysis. Residues Asp-13, Asp-15, and Asp-192 each contribute to the Mg(2+) site.

The protein belongs to the HAD-like hydrolase superfamily. CbbY/CbbZ/Gph/YieH family. In terms of assembly, monomer. Requires Mg(2+) as cofactor. The cofactor is chloride.

The enzyme catalyses 2-phosphoglycolate + H2O = glycolate + phosphate. The protein operates within organic acid metabolism; glycolate biosynthesis; glycolate from 2-phosphoglycolate: step 1/1. Specifically catalyzes the dephosphorylation of 2-phosphoglycolate. Is involved in the dissimilation of the intracellular 2-phosphoglycolate formed during the DNA repair of 3'-phosphoglycolate ends, a major class of DNA lesions induced by oxidative stress. This chain is Phosphoglycolate phosphatase, found in Salmonella paratyphi A (strain ATCC 9150 / SARB42).